The following is a 478-amino-acid chain: UDP-glycosyltransferase 71B5 (478 aa).

Residues serine 280, alanine 347–glutamine 349, histidine 364–glutamate 372, and tyrosine 386–glutamine 389 contribute to the UDP-alpha-D-glucose site.

It belongs to the UDP-glycosyltransferase family.

Possesses low quercetin 3-O-glucosyltransferase activity in vitro. This Arabidopsis thaliana (Mouse-ear cress) protein is UDP-glycosyltransferase 71B5 (UGT71B5).